Consider the following 66-residue polypeptide: Large ribosomal subunit protein bL31 (66 aa).

Zn(2+) contacts are provided by C16, C18, C36, and C39.

The protein belongs to the bacterial ribosomal protein bL31 family. Type A subfamily. In terms of assembly, part of the 50S ribosomal subunit during exponential growth. Zn(2+) serves as cofactor.

Binds the 23S rRNA. Functionally, while neither of the L31 paralogs is essential, this protein seems to function as the main L31 protein. Has a lower affinity for 70S ribosomes than the non-zinc-containing paralog L31B (ytiA); is displaced by it to varying extents, even under zinc-replete conditions. The sequence is that of Large ribosomal subunit protein bL31 (rpmE) from Bacillus subtilis (strain 168).